We begin with the raw amino-acid sequence, 89 residues long: uncharacterized protein (89 aa).

This is an uncharacterized protein from Saccharomyces cerevisiae (strain ATCC 204508 / S288c) (Baker's yeast).